A 140-amino-acid chain; its full sequence is Nucleoside diphosphate kinase (140 aa).

6 residues coordinate ATP: Lys11, Phe59, Arg87, Thr93, Arg104, and Asn114. Catalysis depends on His117, which acts as the Pros-phosphohistidine intermediate.

The protein belongs to the NDK family. Homotetramer. The cofactor is Mg(2+).

The protein resides in the cytoplasm. It carries out the reaction a 2'-deoxyribonucleoside 5'-diphosphate + ATP = a 2'-deoxyribonucleoside 5'-triphosphate + ADP. It catalyses the reaction a ribonucleoside 5'-diphosphate + ATP = a ribonucleoside 5'-triphosphate + ADP. Major role in the synthesis of nucleoside triphosphates other than ATP. The ATP gamma phosphate is transferred to the NDP beta phosphate via a ping-pong mechanism, using a phosphorylated active-site intermediate. The chain is Nucleoside diphosphate kinase from Brucella melitensis biotype 1 (strain ATCC 23456 / CCUG 17765 / NCTC 10094 / 16M).